The sequence spans 403 residues: Phosphopentomutase (403 aa).

D13, D298, H303, D339, H340, and H351 together coordinate Mn(2+).

It belongs to the phosphopentomutase family. Requires Mn(2+) as cofactor.

Its subcellular location is the cytoplasm. The catalysed reaction is 2-deoxy-alpha-D-ribose 1-phosphate = 2-deoxy-D-ribose 5-phosphate. The enzyme catalyses alpha-D-ribose 1-phosphate = D-ribose 5-phosphate. It participates in carbohydrate degradation; 2-deoxy-D-ribose 1-phosphate degradation; D-glyceraldehyde 3-phosphate and acetaldehyde from 2-deoxy-alpha-D-ribose 1-phosphate: step 1/2. Its function is as follows. Isomerase that catalyzes the conversion of deoxy-ribose 1-phosphate (dRib-1-P) and ribose 1-phosphate (Rib-1-P) to deoxy-ribose 5-phosphate (dRib-5-P) and ribose 5-phosphate (Rib-5-P), respectively. This is Phosphopentomutase from Streptococcus equi subsp. zooepidemicus (strain MGCS10565).